Consider the following 221-residue polypeptide: PKHD-type hydroxylase PMT_0286 (221 aa).

The Fe2OG dioxygenase domain maps to 80–174 (HIHGVMFSRS…RLVCVGWIQS (95 aa)). The Fe cation site is built by H98, D100, and H155. R165 provides a ligand contact to 2-oxoglutarate.

The cofactor is Fe(2+). Requires L-ascorbate as cofactor.

This Prochlorococcus marinus (strain MIT 9313) protein is PKHD-type hydroxylase PMT_0286.